Reading from the N-terminus, the 327-residue chain is Glycerol-3-phosphate dehydrogenase [NAD(P)+] (327 aa).

F14, R35, and K108 together coordinate NADPH. Sn-glycerol 3-phosphate is bound by residues K108 and G136. A140 contacts NADPH. Residues K191, D244, S254, R255, and N256 each contribute to the sn-glycerol 3-phosphate site. K191 (proton acceptor) is an active-site residue. NADPH is bound at residue R255. The NADPH site is built by L275 and E277.

Belongs to the NAD-dependent glycerol-3-phosphate dehydrogenase family.

The protein resides in the cytoplasm. It carries out the reaction sn-glycerol 3-phosphate + NAD(+) = dihydroxyacetone phosphate + NADH + H(+). The enzyme catalyses sn-glycerol 3-phosphate + NADP(+) = dihydroxyacetone phosphate + NADPH + H(+). The protein operates within membrane lipid metabolism; glycerophospholipid metabolism. Its function is as follows. Catalyzes the reduction of the glycolytic intermediate dihydroxyacetone phosphate (DHAP) to sn-glycerol 3-phosphate (G3P), the key precursor for phospholipid synthesis. The chain is Glycerol-3-phosphate dehydrogenase [NAD(P)+] from Agrobacterium fabrum (strain C58 / ATCC 33970) (Agrobacterium tumefaciens (strain C58)).